The chain runs to 249 residues: Type III pantothenate kinase (249 aa).

6 to 13 (DCGNSFIK) serves as a coordination point for ATP. Substrate contacts are provided by residues Tyr-93 and 100–103 (GMDR). Residue Asp-102 is the Proton acceptor of the active site. A K(+)-binding site is contributed by Asp-122. Thr-125 lines the ATP pocket. Substrate is bound at residue Thr-181.

It belongs to the type III pantothenate kinase family. As to quaternary structure, homodimer. NH4(+) serves as cofactor. K(+) is required as a cofactor.

The protein localises to the cytoplasm. The enzyme catalyses (R)-pantothenate + ATP = (R)-4'-phosphopantothenate + ADP + H(+). It functions in the pathway cofactor biosynthesis; coenzyme A biosynthesis; CoA from (R)-pantothenate: step 1/5. Catalyzes the phosphorylation of pantothenate (Pan), the first step in CoA biosynthesis. The polypeptide is Type III pantothenate kinase (Pseudomonas putida (strain ATCC 700007 / DSM 6899 / JCM 31910 / BCRC 17059 / LMG 24140 / F1)).